A 92-amino-acid chain; its full sequence is Large ribosomal subunit protein eL43 (92 aa).

Residues cysteine 39, cysteine 42, cysteine 57, and cysteine 60 each contribute to the Zn(2+) site. Residues 39-60 (CSFCGKTKMKRKAVGIWHCGSC) form a C4-type zinc finger.

The protein belongs to the eukaryotic ribosomal protein eL43 family. As to quaternary structure, component of the large ribosomal subunit.

Its subcellular location is the cytoplasm. Functionally, component of the large ribosomal subunit. The ribosome is a large ribonucleoprotein complex responsible for the synthesis of proteins in the cell. This is Large ribosomal subunit protein eL43 (RPL37A) from Gallus gallus (Chicken).